A 524-amino-acid polypeptide reads, in one-letter code: Vang-like protein 1 (524 aa).

The span at 1 to 15 (MDTESTYSGYSYYSS) shows a compositional bias: low complexity. The segment at 1–85 (MDTESTYSGY…TTAITGTSEH (85 aa)) is disordered. Over 1–117 (MDTESTYSGY…KRYLGLTVAS (117 aa)) the chain is Cytoplasmic. Over residues 73-85 (GETTTAITGTSEH) the composition is skewed to polar residues. A phosphoserine mark is found at serine 86 and serine 88. A helical transmembrane segment spans residues 118–138 (FLGLLVFLTPIAFILLPPILW). The Extracellular segment spans residues 139–151 (RDELEPCGTICEG). A helical membrane pass occupies residues 152 to 172 (LFISMAFKLLILLIGTWALFF). Residues 173-182 (RKRRADMPRV) are Cytoplasmic-facing. A helical transmembrane segment spans residues 183-203 (FVFRALLLVLIFLFVVSYWLF). The Extracellular portion of the chain corresponds to 204 to 222 (YGVRILDSRDRNYQGIVQY). Residues 223 to 243 (AVSLVDALLFIHYLAIVLLEL) form a helical membrane-spanning segment. The Cytoplasmic portion of the chain corresponds to 244–524 (RQLQPMFTLQ…VLRLQSETSV (281 aa)).

The protein belongs to the Vang family. In terms of assembly, heterodimer with VANGL2. Interacts through its C-terminal region with the N-terminal half of DVL1, DVL2 and DVL3. The PDZ domain of DVL1, DVL2 and DVL3 is required for the interaction. In terms of tissue distribution, according to PubMed:11956595, ubiquitously expressed. According to PubMed:12011995, expressed specifically in testis and ovary.

Its subcellular location is the cell membrane. The polypeptide is Vang-like protein 1 (VANGL1) (Homo sapiens (Human)).